The sequence spans 308 residues: tRNA pseudouridine synthase B (308 aa).

The Nucleophile role is filled by aspartate 37.

It belongs to the pseudouridine synthase TruB family. Type 1 subfamily.

The enzyme catalyses uridine(55) in tRNA = pseudouridine(55) in tRNA. Responsible for synthesis of pseudouridine from uracil-55 in the psi GC loop of transfer RNAs. This is tRNA pseudouridine synthase B from Deinococcus radiodurans (strain ATCC 13939 / DSM 20539 / JCM 16871 / CCUG 27074 / LMG 4051 / NBRC 15346 / NCIMB 9279 / VKM B-1422 / R1).